Here is a 160-residue protein sequence, read N- to C-terminus: Ribosomal RNA large subunit methyltransferase H (160 aa).

S-adenosyl-L-methionine-binding positions include L76, G108, and 127–132 (LGELTW).

The protein belongs to the RNA methyltransferase RlmH family. As to quaternary structure, homodimer.

It is found in the cytoplasm. It catalyses the reaction pseudouridine(1915) in 23S rRNA + S-adenosyl-L-methionine = N(3)-methylpseudouridine(1915) in 23S rRNA + S-adenosyl-L-homocysteine + H(+). In terms of biological role, specifically methylates the pseudouridine at position 1915 (m3Psi1915) in 23S rRNA. This chain is Ribosomal RNA large subunit methyltransferase H, found in Brucella anthropi (strain ATCC 49188 / DSM 6882 / CCUG 24695 / JCM 21032 / LMG 3331 / NBRC 15819 / NCTC 12168 / Alc 37) (Ochrobactrum anthropi).